The primary structure comprises 560 residues: Ubiquitin carboxyl-terminal hydrolase MINDY-3 homolog (560 aa).

The span at 1–13 shows a compositional bias: basic and acidic residues; the sequence is MNEKIVREQRGGE. Disordered stretches follow at residues 1–30 and 44–91; these read MNEK…AASA and SHKT…MLNA. 2 stretches are compositionally biased toward low complexity: residues 15-30 and 52-81; these read SPSS…AASA and TASS…SSSS. The active-site Nucleophile is Cys-139. Residues 203–237 form a disordered region; that stretch reads TEAGSTKKRSPAGEEESALAGQAAGSSEEVEEAAE. Ser-212 and Ser-219 each carry phosphoserine. His-403 serves as the catalytic Proton acceptor.

It belongs to the MINDY deubiquitinase family. FAM188 subfamily.

The enzyme catalyses Thiol-dependent hydrolysis of ester, thioester, amide, peptide and isopeptide bonds formed by the C-terminal Gly of ubiquitin (a 76-residue protein attached to proteins as an intracellular targeting signal).. Hydrolase that can remove 'Lys-48'-linked conjugated ubiquitin from proteins. The protein is Ubiquitin carboxyl-terminal hydrolase MINDY-3 homolog (mindy3) of Drosophila melanogaster (Fruit fly).